Here is a 740-residue protein sequence, read N- to C-terminus: Catalase-peroxidase (740 aa).

The signal sequence occupies residues 1 to 27; that stretch reads MFKSTLPIAAAISVALTSMVLPAKALA. Residues 106–228 constitute a cross-link (tryptophyl-tyrosyl-methioninium (Trp-Tyr) (with M-254)); that stretch reads WHSAGVYRVH…LAAVEMGLIY (123 aa). Histidine 107 (proton acceptor) is an active-site residue. Positions 228–254 form a cross-link, tryptophyl-tyrosyl-methioninium (Tyr-Met) (with W-106); the sequence is YVNPEGPHGKPDPLLAANDIRMSFGRM. Histidine 269 lines the heme b pocket.

It belongs to the peroxidase family. Peroxidase/catalase subfamily. In terms of assembly, homodimer or homotetramer. Heme b serves as cofactor. Post-translationally, formation of the three residue Trp-Tyr-Met cross-link is important for the catalase, but not the peroxidase activity of the enzyme.

It carries out the reaction H2O2 + AH2 = A + 2 H2O. The catalysed reaction is 2 H2O2 = O2 + 2 H2O. Bifunctional enzyme with both catalase and broad-spectrum peroxidase activity. The polypeptide is Catalase-peroxidase (Colwellia psychrerythraea (strain 34H / ATCC BAA-681) (Vibrio psychroerythus)).